The sequence spans 242 residues: Octanoyltransferase (242 aa).

Residues 31 to 206 form the BPL/LPL catalytic domain; it reads SQTTDEIWFL…LFLKNFGYNQ (176 aa). Substrate is bound by residues 70 to 77, 137 to 139, and 150 to 152; these read RGGQVTYH, SIG, and GLA. The active-site Acyl-thioester intermediate is the Cys168.

This sequence belongs to the LipB family.

Its subcellular location is the cytoplasm. It carries out the reaction octanoyl-[ACP] + L-lysyl-[protein] = N(6)-octanoyl-L-lysyl-[protein] + holo-[ACP] + H(+). Its pathway is protein modification; protein lipoylation via endogenous pathway; protein N(6)-(lipoyl)lysine from octanoyl-[acyl-carrier-protein]: step 1/2. Functionally, catalyzes the transfer of endogenously produced octanoic acid from octanoyl-acyl-carrier-protein onto the lipoyl domains of lipoate-dependent enzymes. Lipoyl-ACP can also act as a substrate although octanoyl-ACP is likely to be the physiological substrate. In Coxiella burnetii (strain CbuG_Q212) (Coxiella burnetii (strain Q212)), this protein is Octanoyltransferase.